The following is a 113-amino-acid chain: Large ribosomal subunit protein uL22 (113 aa).

The protein belongs to the universal ribosomal protein uL22 family. Part of the 50S ribosomal subunit.

In terms of biological role, this protein binds specifically to 23S rRNA; its binding is stimulated by other ribosomal proteins, e.g. L4, L17, and L20. It is important during the early stages of 50S assembly. It makes multiple contacts with different domains of the 23S rRNA in the assembled 50S subunit and ribosome. The globular domain of the protein is located near the polypeptide exit tunnel on the outside of the subunit, while an extended beta-hairpin is found that lines the wall of the exit tunnel in the center of the 70S ribosome. This chain is Large ribosomal subunit protein uL22, found in Roseiflexus castenholzii (strain DSM 13941 / HLO8).